The following is a 296-amino-acid chain: Haloalkane dehalogenase (296 aa).

The AB hydrolase-1 domain occupies 31 to 155 (PILFQHGNPT…QDRDLFQAFR (125 aa)). A chloride-binding site is contributed by asparagine 38. Aspartate 108 serves as the catalytic Nucleophile. Residue tryptophan 109 participates in chloride binding. The active-site Proton donor is glutamate 132. Residue histidine 272 is the Proton acceptor of the active site.

The protein belongs to the haloalkane dehalogenase family. Type 2 subfamily. In terms of assembly, monomer.

The protein localises to the periplasm. The enzyme catalyses 1-haloalkane + H2O = a halide anion + a primary alcohol + H(+). It carries out the reaction (3R,6R)-1,3,4,6-tetrachlorocyclohexa-1,4-diene + 2 H2O = 2,5-dichlorocyclohexa-2,5-dien-1,4-diol + 2 chloride + 2 H(+). Its pathway is xenobiotic degradation; gamma-hexachlorocyclohexane degradation. Its activity is regulated as follows. Competitively inhibited by the key pollutants 1,2-dichloroethane (1,2-DCE) and 1,2-dichloropropane (1,2-DCP). Functionally, catalyzes hydrolytic cleavage of carbon-halogen bonds in halogenated aliphatic compounds, leading to the formation of the corresponding primary alcohols, halide ions and protons. Has a broad substrate specificity since not only monochloroalkanes (C3 to C10) but also dichloroalkanes (&gt; C3), bromoalkanes, and chlorinated aliphatic alcohols are good substrates. Shows almost no activity with 1,2-dichloroethane, but very high activity with the brominated analog. Is involved in the degradation of the important environmental pollutant gamma-hexachlorocyclohexane (gamma-HCH or lindane) as it also catalyzes conversion of 1,3,4,6-tetrachloro-1,4-cyclohexadiene (1,4-TCDN) to 2,5-dichloro-2,5-cyclohexadiene-1,4-diol (2,5-DDOL) via the intermediate 2,4,5-trichloro-2,5-cyclohexadiene-1-ol (2,4,5-DNOL). This degradation pathway allows S.japonicum UT26 to grow on gamma-HCH as the sole source of carbon and energy. This is Haloalkane dehalogenase from Sphingobium indicum (strain DSM 16413 / CCM 7287 / MTCC 6362 / UT26 / NBRC 101211 / UT26S) (Sphingobium japonicum).